The chain runs to 262 residues: Pyridoxine 5'-phosphate synthase (262 aa).

N6 contacts 3-amino-2-oxopropyl phosphate. Residue 8 to 9 (DH) coordinates 1-deoxy-D-xylulose 5-phosphate. R17 is a 3-amino-2-oxopropyl phosphate binding site. The active-site Proton acceptor is H41. 1-deoxy-D-xylulose 5-phosphate is bound by residues R43 and H48. E68 functions as the Proton acceptor in the catalytic mechanism. Residue T98 participates in 1-deoxy-D-xylulose 5-phosphate binding. H210 acts as the Proton donor in catalysis. 3-amino-2-oxopropyl phosphate-binding positions include G211 and 232 to 233 (GQ).

It belongs to the PNP synthase family. As to quaternary structure, homooctamer; tetramer of dimers.

The protein resides in the cytoplasm. It carries out the reaction 3-amino-2-oxopropyl phosphate + 1-deoxy-D-xylulose 5-phosphate = pyridoxine 5'-phosphate + phosphate + 2 H2O + H(+). It functions in the pathway cofactor biosynthesis; pyridoxine 5'-phosphate biosynthesis; pyridoxine 5'-phosphate from D-erythrose 4-phosphate: step 5/5. Functionally, catalyzes the complicated ring closure reaction between the two acyclic compounds 1-deoxy-D-xylulose-5-phosphate (DXP) and 3-amino-2-oxopropyl phosphate (1-amino-acetone-3-phosphate or AAP) to form pyridoxine 5'-phosphate (PNP) and inorganic phosphate. In Campylobacter jejuni subsp. jejuni serotype O:23/36 (strain 81-176), this protein is Pyridoxine 5'-phosphate synthase.